We begin with the raw amino-acid sequence, 396 residues long: Purine ribonucleoside efflux pump NepI (396 aa).

At 1-21 (MSEFIAENRGADAITRPNWSA) the chain is on the cytoplasmic side. A helical membrane pass occupies residues 22–42 (VFSVAFCVACLIIVEFLPVSL). Residues 43-54 (LTPMAQDLGISE) lie on the Periplasmic side of the membrane. The helical transmembrane segment at 55–75 (GVAGQSVTVTAFVAMFASLFI) threads the bilayer. At 76–85 (TQTIQATDRC) the chain is on the cytoplasmic side. A helical transmembrane segment spans residues 86–106 (YVVILFAVLLTLSCLLVSFAN). A topological domain (periplasmic) is located at residue S107. Residues 108 to 128 (FSLLLIGRACLGLALGGFWAM) form a helical membrane-spanning segment. The Cytoplasmic segment spans residues 129–147 (SASLTMRLVPPRTVPKALS). The helical transmembrane segment at 148 to 168 (VIFGAVSIALVIAAPLGSFLG) threads the bilayer. Over 169 to 175 (ELIGWRN) the chain is Periplasmic. A helical transmembrane segment spans residues 176-196 (VFNAAAVMGVLCIFWIIKSLP). Over 197–215 (SLPGEPSHQKQNTFRLLQR) the chain is Cytoplasmic. The chain crosses the membrane as a helical span at residues 216–236 (PGVMAGMIAIFMSFAGQFAFF). Residues 237–255 (TYIRPVYMNLAGFGVDGLT) are Periplasmic-facing. A helical membrane pass occupies residues 256 to 276 (LVLLSFGIASFIGTSLSSFIL). The Cytoplasmic segment spans residues 277–281 (KRSVK). A helical transmembrane segment spans residues 282 to 302 (LALAGAPLILAVSALVLTLWG). Residues 303–305 (SDK) are Periplasmic-facing. A helical membrane pass occupies residues 306-326 (IVATGVAIIWGLTFALVPVGW). Residues 327 to 343 (STWITRSLADQAEKAGS) lie on the Cytoplasmic side of the membrane. The helical transmembrane segment at 344-364 (IQVAVIQLANTCGAAIGGYAL) threads the bilayer. The Periplasmic segment spans residues 365-366 (DN). The chain crosses the membrane as a helical span at residues 367 to 387 (IGLTSPLMLSGTLMLLTALLV). The Cytoplasmic portion of the chain corresponds to 388 to 396 (TAKVKMKKS).

It belongs to the major facilitator superfamily. DHA1 family. NepI (TC 2.A.1.2.26) subfamily.

It is found in the cell inner membrane. The enzyme catalyses inosine(in) + H(+)(out) = inosine(out) + H(+)(in). It catalyses the reaction guanosine(in) + H(+)(out) = guanosine(out) + H(+)(in). Involved in the efflux of purine ribonucleosides, such as inosine and guanosine. The chain is Purine ribonucleoside efflux pump NepI from Shigella boydii serotype 4 (strain Sb227).